Here is a 304-residue protein sequence, read N- to C-terminus: Homoserine kinase (304 aa).

90–100 (PLARGLGSSAS) lines the ATP pocket.

The protein belongs to the GHMP kinase family. Homoserine kinase subfamily.

The protein resides in the cytoplasm. The enzyme catalyses L-homoserine + ATP = O-phospho-L-homoserine + ADP + H(+). It functions in the pathway amino-acid biosynthesis; L-threonine biosynthesis; L-threonine from L-aspartate: step 4/5. Its function is as follows. Catalyzes the ATP-dependent phosphorylation of L-homoserine to L-homoserine phosphate. This Staphylococcus aureus (strain bovine RF122 / ET3-1) protein is Homoserine kinase.